The sequence spans 564 residues: Nucleolus and neural progenitor protein (564 aa).

A disordered region spans residues 431–495; it reads GSRTSTSEHP…KRRCSGTVQR (65 aa). The segment covering 442–459 has biased composition (basic residues); the sequence is RQRRSKYKVLSRQRKPQR. The tract at residues 442-460 is nuclear localization signal; it reads RQRRSKYKVLSRQRKPQRK. The segment covering 460–473 has biased composition (polar residues); the sequence is KLQSTLLKETQQVP.

The protein belongs to the nepro family.

The protein resides in the nucleus. Its subcellular location is the nucleolus. Functionally, may play a role in cortex development as part of the Notch signaling pathway. Downstream of Notch may repress the expression of proneural genes and inhibit neuronal differentiation thereby maintaining neural progenitors. May also play a role in preimplentation embryo development. The sequence is that of Nucleolus and neural progenitor protein from Mus musculus (Mouse).